The sequence spans 103 residues: MYAVIAAGGKQHRVEEGEVLRLEKIEVATGETVDFDQVLLVGSGADVKIGTPVVEGAKVTAEVVSHGRADKVTIIKFKRRKHHMKRQGHRQWYTEVKITGIQG.

Belongs to the bacterial ribosomal protein bL21 family. In terms of assembly, part of the 50S ribosomal subunit. Contacts protein L20.

This protein binds to 23S rRNA in the presence of protein L20. This Teredinibacter turnerae (strain ATCC 39867 / T7901) protein is Large ribosomal subunit protein bL21.